Here is a 68-residue protein sequence, read N- to C-terminus: Large ribosomal subunit protein uL29 (68 aa).

It belongs to the universal ribosomal protein uL29 family.

The sequence is that of Large ribosomal subunit protein uL29 from Maricaulis maris (strain MCS10) (Caulobacter maris).